The following is a 204-amino-acid chain: Lipoprotein signal peptidase (204 aa).

Residues 1–42 (MAEAERIIGTPDIPDAAGEGQERPDADPEREQQEQEQAPERT) are disordered. Basic and acidic residues predominate over residues 20 to 42 (GQERPDADPEREQQEQEQAPERT). The next 3 helical transmembrane spans lie at 50 to 70 (VLFA…MLVV), 100 to 120 (FGEA…VVIA), and 126 to 146 (LHSL…LGNL). Active-site residues include Asp-163 and Asp-177. A helical membrane pass occupies residues 170–190 (FAVFNLADSAIVCGGILIVIL).

This sequence belongs to the peptidase A8 family.

The protein localises to the cell membrane. It carries out the reaction Release of signal peptides from bacterial membrane prolipoproteins. Hydrolyzes -Xaa-Yaa-Zaa-|-(S,diacylglyceryl)Cys-, in which Xaa is hydrophobic (preferably Leu), and Yaa (Ala or Ser) and Zaa (Gly or Ala) have small, neutral side chains.. It functions in the pathway protein modification; lipoprotein biosynthesis (signal peptide cleavage). This protein specifically catalyzes the removal of signal peptides from prolipoproteins. The polypeptide is Lipoprotein signal peptidase (Streptomyces coelicolor (strain ATCC BAA-471 / A3(2) / M145)).